We begin with the raw amino-acid sequence, 599 residues long: rRNA (cytosine-C(5))-methyltransferase NOP2C (599 aa).

Residues 158-265 form the PUA domain; that stretch reads PKEVLVSRKC…IAVDLNHRVF (108 aa). S-adenosyl-L-methionine contacts are provided by residues 304-310, Asp-328, and Asp-355; that span reads CAAPGGK. The disordered stretch occupies residues 372–454; it reads LINGDNSSSM…GGRAGKSQGF (83 aa). Residues 378–388 show a composition bias toward low complexity; that stretch reads SSSMTSHSELS. A compositionally biased stretch (basic and acidic residues) spans 399 to 412; it reads RRSEADKSCEKNDS. Polar residues predominate over residues 413–424; the sequence is TEQPNGGDNVSQ. The span at 428–438 shows a compositional bias: basic residues; it reads RKNKGRLKNGR. Asp-465 is a binding site for S-adenosyl-L-methionine. Catalysis depends on Cys-516, which acts as the Nucleophile.

Belongs to the class I-like SAM-binding methyltransferase superfamily. RsmB/NOP family.

Its subcellular location is the nucleus. The protein localises to the nucleolus. It carries out the reaction a cytidine in rRNA + S-adenosyl-L-methionine = a 5-methylcytidine in rRNA + S-adenosyl-L-homocysteine + H(+). Functionally, involved in ribosomal large subunit assembly. S-adenosyl-L-methionine-dependent methyltransferase that may methylates the C(5) position of cytosine in rRNA. May play a role in the regulation of the cell cycle and the increased nucleolar activity that is associated with the cell proliferation. Seems involved in the regulation of cell proliferation. This is rRNA (cytosine-C(5))-methyltransferase NOP2C from Arabidopsis thaliana (Mouse-ear cress).